Here is a 616-residue protein sequence, read N- to C-terminus: Dihydroxy-acid dehydratase (616 aa).

Residue aspartate 81 participates in Mg(2+) binding. Cysteine 122 provides a ligand contact to [2Fe-2S] cluster. 2 residues coordinate Mg(2+): aspartate 123 and lysine 124. The residue at position 124 (lysine 124) is an N6-carboxylysine. Cysteine 195 is a binding site for [2Fe-2S] cluster. Glutamate 491 serves as a coordination point for Mg(2+). The active-site Proton acceptor is serine 517.

It belongs to the IlvD/Edd family. In terms of assembly, homodimer. It depends on [2Fe-2S] cluster as a cofactor. Mg(2+) serves as cofactor.

It catalyses the reaction (2R)-2,3-dihydroxy-3-methylbutanoate = 3-methyl-2-oxobutanoate + H2O. The catalysed reaction is (2R,3R)-2,3-dihydroxy-3-methylpentanoate = (S)-3-methyl-2-oxopentanoate + H2O. It functions in the pathway amino-acid biosynthesis; L-isoleucine biosynthesis; L-isoleucine from 2-oxobutanoate: step 3/4. It participates in amino-acid biosynthesis; L-valine biosynthesis; L-valine from pyruvate: step 3/4. Functions in the biosynthesis of branched-chain amino acids. Catalyzes the dehydration of (2R,3R)-2,3-dihydroxy-3-methylpentanoate (2,3-dihydroxy-3-methylvalerate) into 2-oxo-3-methylpentanoate (2-oxo-3-methylvalerate) and of (2R)-2,3-dihydroxy-3-methylbutanoate (2,3-dihydroxyisovalerate) into 2-oxo-3-methylbutanoate (2-oxoisovalerate), the penultimate precursor to L-isoleucine and L-valine, respectively. The polypeptide is Dihydroxy-acid dehydratase (Shigella boydii serotype 4 (strain Sb227)).